The sequence spans 373 residues: SAM domain-containing protein SAMSN-1 (373 aa).

Residues M1–A72 form a disordered region. The Important for interaction with 14-3-3 proteins motif lies at R20–G25. S23 and S34 each carry phosphoserine. Positions K37–D48 are enriched in basic and acidic residues. A compositionally biased stretch (polar residues) spans T50–N61. S74 carries the phosphoserine modification. T76 is subject to Phosphothreonine. 2 positions are modified to phosphoserine: S90 and S119. The disordered stretch occupies residues E91–R153. Positions S123–T146 are enriched in low complexity. Residue Y160 is modified to Phosphotyrosine. One can recognise an SH3 domain in the interval P163 to E224. An SAM domain is found at K241 to E305. A disordered region spans residues D337–L359.

In terms of assembly, interacts with FASLG. Interacts with phosphotyrosine containing proteins. Interacts (via SH3 domain) with CTTN. Interacts (phosphorylated at Ser-23) with YWHAB, YWHAE, YWHAG, YWHAH, YWHAZ and SFN. Interacts directly with SAP30 and HDAC1. Identified in a complex with SAP30 and HDAC1. In terms of tissue distribution, detected in peripheral blood B-cells (at protein level). Detected in spleen, liver and peripheral blood.

It localises to the nucleus. It is found in the cytoplasm. Its subcellular location is the cell projection. The protein resides in the ruffle. Functionally, negative regulator of B-cell activation. Down-regulates cell proliferation (in vitro). Promotes RAC1-dependent membrane ruffle formation and reorganization of the actin cytoskeleton. Regulates cell spreading and cell polarization. Stimulates HDAC1 activity. Regulates LYN activity by modulating its tyrosine phosphorylation. The chain is SAM domain-containing protein SAMSN-1 (SAMSN1) from Homo sapiens (Human).